Here is a 248-residue protein sequence, read N- to C-terminus: Granzyme E (248 aa).

Residues 1–18 form the signal peptide; sequence MPPVLILLTLLLPLGAGA. Positions 19–20 are excised as a propeptide; that stretch reads EE. In terms of domain architecture, Peptidase S1 spans 21 to 246; that stretch reads IIGGHVVKPH…FLPWISRNMK (226 aa). Cysteine 50 and cysteine 66 are disulfide-bonded. Histidine 65 acts as the Charge relay system in catalysis. Residues asparagine 68 and asparagine 102 are each glycosylated (N-linked (GlcNAc...) asparagine). The active-site Charge relay system is aspartate 109. Cystine bridges form between cysteine 143–cysteine 210 and cysteine 175–cysteine 189. An N-linked (GlcNAc...) asparagine glycan is attached at asparagine 154. Serine 204 acts as the Charge relay system in catalysis. N-linked (GlcNAc...) asparagine glycosylation is present at asparagine 223.

This sequence belongs to the peptidase S1 family. Granzyme subfamily.

The protein localises to the cytolytic granule. This enzyme is probably necessary for target cell lysis in cell-mediated immune responses. This chain is Granzyme E (Gzme), found in Mus musculus (Mouse).